We begin with the raw amino-acid sequence, 172 residues long: MHYARIVSNLHLGYDIIHMAEYVTLTTNRKAFHNYFLEEKYEAGIMLLGTEIKSLRSGRVNMGDAYVKPQRGELWLVNAHISAYECSGHTSHEPMRERKLLMHRKEIALLMSKVKEKGLTLIPVRIYLKNDIAKVELSLGRGKKLYDKRDTITKRDTERELEREVKYRNFRR.

Belongs to the SmpB family.

Its subcellular location is the cytoplasm. In terms of biological role, required for rescue of stalled ribosomes mediated by trans-translation. Binds to transfer-messenger RNA (tmRNA), required for stable association of tmRNA with ribosomes. tmRNA and SmpB together mimic tRNA shape, replacing the anticodon stem-loop with SmpB. tmRNA is encoded by the ssrA gene; the 2 termini fold to resemble tRNA(Ala) and it encodes a 'tag peptide', a short internal open reading frame. During trans-translation Ala-aminoacylated tmRNA acts like a tRNA, entering the A-site of stalled ribosomes, displacing the stalled mRNA. The ribosome then switches to translate the ORF on the tmRNA; the nascent peptide is terminated with the 'tag peptide' encoded by the tmRNA and targeted for degradation. The ribosome is freed to recommence translation, which seems to be the essential function of trans-translation. The protein is SsrA-binding protein of Dehalococcoides mccartyi (strain ATCC BAA-2266 / KCTC 15142 / 195) (Dehalococcoides ethenogenes (strain 195)).